Reading from the N-terminus, the 230-residue chain is Ubiquitin carboxyl-terminal hydrolase isozyme L3 (230 aa).

A UCH catalytic domain is found at R5–A229. Positions P8–P13 are interaction with ubiquitin. C95 functions as the Nucleophile in the catalytic mechanism. A Phosphoserine modification is found at S130. The segment at A152–A159 is interaction with ubiquitin. Crossover loop which restricts access of large ubiquitin adducts to the active site. The Proton donor role is filled by H169. Residues E219 to A224 form an interaction with ubiquitin region.

Belongs to the peptidase C12 family. As to quaternary structure, preferentially binds diubiquitin; the interaction does not hydrolyze diubiquitin but, in vitro, inhibits the hydrolyzing activity on other substrates. As to expression, highly expressed in heart, skeletal muscle, and testis.

It localises to the cytoplasm. It carries out the reaction Thiol-dependent hydrolysis of ester, thioester, amide, peptide and isopeptide bonds formed by the C-terminal Gly of ubiquitin (a 76-residue protein attached to proteins as an intracellular targeting signal).. Inhibited by monoubiquitin and diubiquitin. Its function is as follows. Deubiquitinating enzyme (DUB) that controls levels of cellular ubiquitin through processing of ubiquitin precursors and ubiquitinated proteins. Thiol protease that recognizes and hydrolyzes a peptide bond at the C-terminal glycine of either ubiquitin or NEDD8. Has a 10-fold preference for Arg and Lys at position P3'', and exhibits a preference towards 'Lys-48'-linked ubiquitin chains. Deubiquitinates ENAC in apical compartments, thereby regulating apical membrane recycling. Indirectly increases the phosphorylation of IGFIR, AKT and FOXO1 and promotes insulin-signaling and insulin-induced adipogenesis. Required for stress-response retinal, skeletal muscle and germ cell maintenance. May be involved in working memory. Can hydrolyze UBB(+1), a mutated form of ubiquitin which is not effectively degraded by the proteasome and is associated with neurogenerative disorders. This chain is Ubiquitin carboxyl-terminal hydrolase isozyme L3 (UCHL3), found in Homo sapiens (Human).